A 689-amino-acid chain; its full sequence is Glycine--tRNA ligase beta subunit (689 aa).

It belongs to the class-II aminoacyl-tRNA synthetase family. Tetramer of two alpha and two beta subunits.

The protein localises to the cytoplasm. The enzyme catalyses tRNA(Gly) + glycine + ATP = glycyl-tRNA(Gly) + AMP + diphosphate. The protein is Glycine--tRNA ligase beta subunit of Actinobacillus succinogenes (strain ATCC 55618 / DSM 22257 / CCUG 43843 / 130Z).